Consider the following 378-residue polypeptide: Lipid-A-disaccharide synthase (378 aa).

This sequence belongs to the LpxB family.

It catalyses the reaction a lipid X + a UDP-2-N,3-O-bis[(3R)-3-hydroxyacyl]-alpha-D-glucosamine = a lipid A disaccharide + UDP + H(+). It functions in the pathway bacterial outer membrane biogenesis; LPS lipid A biosynthesis. In terms of biological role, condensation of UDP-2,3-diacylglucosamine and 2,3-diacylglucosamine-1-phosphate to form lipid A disaccharide, a precursor of lipid A, a phosphorylated glycolipid that anchors the lipopolysaccharide to the outer membrane of the cell. This chain is Lipid-A-disaccharide synthase, found in Pseudomonas aeruginosa (strain UCBPP-PA14).